A 92-amino-acid polypeptide reads, in one-letter code: MLTIIRTLMAIDWLKIFCLRKSPKDEDQAHPMLDILPQTLDSVKKSSSRFPRKMLAATISILEEEVTELVTELNNTTNLTAKKECPRITNAL.

Residues 53–82 adopt a coiled-coil conformation; the sequence is KMLAATISILEEEVTELVTELNNTTNLTAK.

The protein is Protein OP-ORF of Rice dwarf virus (isolate Fujian) (RDV).